The sequence spans 190 residues: Potassium-transporting ATPase KdpC subunit (190 aa).

The helical transmembrane segment at 13-33 threads the bilayer; that stretch reads LLLILTLITGILYPIVTTGFA.

Belongs to the KdpC family. As to quaternary structure, the system is composed of three essential subunits: KdpA, KdpB and KdpC.

It localises to the cell inner membrane. In terms of biological role, part of the high-affinity ATP-driven potassium transport (or Kdp) system, which catalyzes the hydrolysis of ATP coupled with the electrogenic transport of potassium into the cytoplasm. This subunit acts as a catalytic chaperone that increases the ATP-binding affinity of the ATP-hydrolyzing subunit KdpB by the formation of a transient KdpB/KdpC/ATP ternary complex. In Leptospira interrogans serogroup Icterohaemorrhagiae serovar copenhageni (strain Fiocruz L1-130), this protein is Potassium-transporting ATPase KdpC subunit.